The chain runs to 534 residues: Glucans biosynthesis protein D (534 aa).

Residues Met-1–Ala-30 constitute a signal peptide (tat-type signal).

This sequence belongs to the OpgD/OpgG family. In terms of processing, predicted to be exported by the Tat system. The position of the signal peptide cleavage has not been experimentally proven.

Its subcellular location is the periplasm. The protein operates within glycan metabolism; osmoregulated periplasmic glucan (OPG) biosynthesis. Its function is as follows. Probably involved in the control of the structural glucose backbone of osmoregulated periplasmic glucans (OPGs). The polypeptide is Glucans biosynthesis protein D (Xanthomonas oryzae pv. oryzae (strain PXO99A)).